Reading from the N-terminus, the 486-residue chain is UDP-N-acetylmuramate--L-alanine ligase (486 aa).

132-138 (GTHGKTT) contributes to the ATP binding site.

It belongs to the MurCDEF family.

The protein resides in the cytoplasm. It carries out the reaction UDP-N-acetyl-alpha-D-muramate + L-alanine + ATP = UDP-N-acetyl-alpha-D-muramoyl-L-alanine + ADP + phosphate + H(+). It participates in cell wall biogenesis; peptidoglycan biosynthesis. In terms of biological role, cell wall formation. This chain is UDP-N-acetylmuramate--L-alanine ligase, found in Halorhodospira halophila (strain DSM 244 / SL1) (Ectothiorhodospira halophila (strain DSM 244 / SL1)).